Reading from the N-terminus, the 444-residue chain is Interferon-induced protein 44 (444 aa).

The TLDc domain maps to 1 to 152; the sequence is MAVTTRLTWL…IQDYEVFRCE (152 aa).

This sequence belongs to the IFI44 family. Hepatocytes.

The protein localises to the cytoplasm. In terms of biological role, this protein aggregates to form microtubular structures. The polypeptide is Interferon-induced protein 44 (IFI44) (Pan troglodytes (Chimpanzee)).